The following is a 118-amino-acid chain: RxLR effector protein PITG_19617 (118 aa).

An N-terminal signal peptide occupies residues 1-21 (MRAVYILAMACAATLQASSSA). The RxLR-dEER motif lies at 50 to 64 (RLLRVEDKEEETEEE).

Belongs to the RxLR effector family.

Its subcellular location is the secreted. The protein resides in the host nucleus. The protein localises to the host cytoplasm. Its function is as follows. Effector that enhances P.infestans colonization of Nicotiana benthamiana leaves. This Phytophthora infestans (strain T30-4) (Potato late blight agent) protein is RxLR effector protein PITG_19617.